A 572-amino-acid chain; its full sequence is Proline--tRNA ligase (572 aa).

This sequence belongs to the class-II aminoacyl-tRNA synthetase family. ProS type 1 subfamily. As to quaternary structure, homodimer.

The protein localises to the cytoplasm. The enzyme catalyses tRNA(Pro) + L-proline + ATP = L-prolyl-tRNA(Pro) + AMP + diphosphate. Catalyzes the attachment of proline to tRNA(Pro) in a two-step reaction: proline is first activated by ATP to form Pro-AMP and then transferred to the acceptor end of tRNA(Pro). As ProRS can inadvertently accommodate and process non-cognate amino acids such as alanine and cysteine, to avoid such errors it has two additional distinct editing activities against alanine. One activity is designated as 'pretransfer' editing and involves the tRNA(Pro)-independent hydrolysis of activated Ala-AMP. The other activity is designated 'posttransfer' editing and involves deacylation of mischarged Ala-tRNA(Pro). The misacylated Cys-tRNA(Pro) is not edited by ProRS. The polypeptide is Proline--tRNA ligase (Escherichia coli (strain K12 / MC4100 / BW2952)).